The chain runs to 319 residues: Beta-ketoacyl-[acyl-carrier-protein] synthase III (319 aa).

Active-site residues include Cys-113 and His-246. The interval 247–251 is ACP-binding; that stretch reads QANLR. Residue Asn-276 is part of the active site.

The protein belongs to the thiolase-like superfamily. FabH family. As to quaternary structure, homodimer.

It is found in the cytoplasm. The catalysed reaction is malonyl-[ACP] + acetyl-CoA + H(+) = 3-oxobutanoyl-[ACP] + CO2 + CoA. Its pathway is lipid metabolism; fatty acid biosynthesis. In terms of biological role, catalyzes the condensation reaction of fatty acid synthesis by the addition to an acyl acceptor of two carbons from malonyl-ACP. Catalyzes the first condensation reaction which initiates fatty acid synthesis and may therefore play a role in governing the total rate of fatty acid production. Possesses both acetoacetyl-ACP synthase and acetyl transacylase activities. Its substrate specificity determines the biosynthesis of branched-chain and/or straight-chain of fatty acids. This chain is Beta-ketoacyl-[acyl-carrier-protein] synthase III, found in Laribacter hongkongensis (strain HLHK9).